The primary structure comprises 88 residues: Small ribosomal subunit protein bS16c (88 aa).

This sequence belongs to the bacterial ribosomal protein bS16 family.

It localises to the plastid. The protein localises to the chloroplast. The chain is Small ribosomal subunit protein bS16c from Lactuca sativa (Garden lettuce).